The primary structure comprises 162 residues: SCF ubiquitin ligase complex protein SKP1a (162 aa).

At serine 2 the chain carries N-acetylserine. Residues 100 to 162 (ILAANYLDIK…NEWCEDKGGN (63 aa)) form an interaction with the F-box domain of F-box proteins region. The residue at position 143 (proline 143) is a 4-hydroxyproline. Proline 143 is a glycosylation site (O-linked (GlcNAc...) hydroxyproline).

This sequence belongs to the SKP1 family. As to quaternary structure, multiprotein complex (SCF) with cullin and F-box-containing protein. Capable of undergoing aggregation. O-linked glycan consists of linear Gal-Gal-Fuc-Gal-GlcNAc. Post-translationally, fpaA and fpaB seem to be identically glycosylated. Glycosylation is required for nuclear enrichment. In terms of processing, hydroxylated by phyA.

It is found in the cytoplasm. The protein localises to the nucleus. The protein is SCF ubiquitin ligase complex protein SKP1a (fpaA) of Dictyostelium discoideum (Social amoeba).